Reading from the N-terminus, the 508-residue chain is Steroid 17-alpha-hydroxylase/17,20 lyase (508 aa).

Substrate is bound at residue Asn-202. Cys-442 contacts heme.

Belongs to the cytochrome P450 family. Requires heme as cofactor.

It localises to the endoplasmic reticulum membrane. Its subcellular location is the microsome membrane. The catalysed reaction is a C21-steroid + reduced [NADPH--hemoprotein reductase] + O2 = a 17alpha-hydroxy-C21-steroid + oxidized [NADPH--hemoprotein reductase] + H2O + H(+). The enzyme catalyses progesterone + reduced [NADPH--hemoprotein reductase] + O2 = 17alpha-hydroxyprogesterone + oxidized [NADPH--hemoprotein reductase] + H2O + H(+). It carries out the reaction pregnenolone + reduced [NADPH--hemoprotein reductase] + O2 = 17alpha-hydroxypregnenolone + oxidized [NADPH--hemoprotein reductase] + H2O + H(+). It catalyses the reaction 17alpha-hydroxyprogesterone + reduced [NADPH--hemoprotein reductase] + O2 = androst-4-ene-3,17-dione + acetate + oxidized [NADPH--hemoprotein reductase] + H2O + 2 H(+). The catalysed reaction is 17alpha-hydroxyprogesterone + reduced [NADPH--hemoprotein reductase] + O2 = 16alpha,17alpha-dihydroxyprogesterone + oxidized [NADPH--hemoprotein reductase] + H2O + H(+). The enzyme catalyses 16alpha,17alpha-dihydroxyprogesterone + reduced [NADPH--hemoprotein reductase] + O2 = 6beta,16alpha,17alpha-trihydroxyprogesterone + oxidized [NADPH--hemoprotein reductase] + H2O + H(+). It carries out the reaction 17alpha-hydroxypregnenolone + reduced [NADPH--hemoprotein reductase] + O2 = 3beta-hydroxyandrost-5-en-17-one + acetate + oxidized [NADPH--hemoprotein reductase] + H2O + 2 H(+). It catalyses the reaction 16alpha,17alpha-dihydroxypregnenolone + reduced [NADPH--hemoprotein reductase] + O2 = 3beta,16alpha-dihydroxy-androst-5-en-17-one + acetate + oxidized [NADPH--hemoprotein reductase] + H2O + 2 H(+). The catalysed reaction is 3beta-hydroxyandrost-5-en-17-one + reduced [NADPH--hemoprotein reductase] + O2 = 3beta,16alpha-dihydroxy-androst-5-en-17-one + oxidized [NADPH--hemoprotein reductase] + H2O + H(+). The enzyme catalyses androst-4-ene-3,17-dione + reduced [NADPH--hemoprotein reductase] + O2 = 16alpha-hydroxyandrost-4-ene-3,17-dione + oxidized [NADPH--hemoprotein reductase] + H2O + H(+). Its pathway is steroid hormone biosynthesis. The protein operates within steroid biosynthesis; glucocorticoid biosynthesis. Regulated predominantly by intracellular cAMP levels. The 17,20-lyase activity is stimulated by cytochrome b5, which acts as an allosteric effector increasing the Vmax of the lyase activity. A cytochrome P450 monooxygenase involved in corticoid and androgen biosynthesis. Catalyzes 17-alpha hydroxylation of C21 steroids, which is common for both pathways. A second oxidative step, required only for androgen synthesis, involves an acyl-carbon cleavage. The 17-alpha hydroxy intermediates, as part of adrenal glucocorticoids biosynthesis pathway, are precursors of cortisol. Hydroxylates steroid hormones, pregnenolone and progesterone to form 17-alpha hydroxy metabolites, followed by the cleavage of the C17-C20 bond to form C19 steroids, dehydroepiandrosterone (DHEA) and androstenedione. Has 16-alpha hydroxylase activity. Catalyzes 16-alpha hydroxylation of 17-alpha hydroxy pregnenolone, followed by the cleavage of the C17-C20 bond to form 16-alpha-hydroxy DHEA. Also 16-alpha hydroxylates androgens, relevant for estriol synthesis. Mechanistically, uses molecular oxygen inserting one oxygen atom into a substrate, and reducing the second into a water molecule, with two electrons provided by NADPH via cytochrome P450 reductase (CPR; NADPH-ferrihemoprotein reductase). The protein is Steroid 17-alpha-hydroxylase/17,20 lyase (CYP17A1) of Felis catus (Cat).